The primary structure comprises 1258 residues: MRALLASQGICNFHNILSVELVRQAVPVFGYMYFPPTSEKVYGVGNDAILGNHHGHAHLHHHFHRGGNNNPTPIEISVGATSTRIEYSGTPVAVNDSAELVSQALGKLAVINKERYENITYNRYEFADAHQIVGQKINAPPLNYGSNVTQSLPNISSHEKRDDHEGNSTRRLVYSISPELAQAARILAESQPPTPSTGEEADLAMNVRMKYFAESNDTNTPQQAHRHSDGLSEYAVTWADEMPLANRTTVENDGKLLKRASSSDYWMANLEQRGASPYAPTGYKVFRNVKDYGAKGDGVTDDTAAINTAIADGNRCGADCSSSTVYPAVVFFPRGSYLVSSPIIQYYNTQFLGDPGDYPTILAAASFVGLGVITSDVYVGDQDEWYINTNNFLRSVRNFKMDITRTDPNAYVCAIHWQVAQGTSLENIDFYMSRAAGNTQQGIYMENGSGGFMANLTFVGGNFGAYLGNQQFTTSQLVFVQCKTAMQVHWDWAWTMQDVVIESCGTGILLTGGAGGSFSTGQGVGSLILVDAIIANTPTGIMTSLYGQNSTEFLLQNVGFFNVQKAIIAERFSDPILAGGNEVLIDAWGFGLYGNASGVFFAQENDLPVMKRPEALVGSNKYVKPNLFTRRRPQYYDLGGSQVIDVKAYGAKGDGVTDDTDALNSVLSTAANLSSIVFIPYGVYIIKDTLKVPEGSRIMGQAWSQIMATGAKFEDIEKPHVAVKIGDHGDEGIVEIQELLFTVSGPTAGAILVEWNIHESTQGSAGLWDSHFRVGGAKGSMLQAKDCPKRASTLNKNCIAASMLMHITQGASAYIWRDSWYREPTDIVGQRNFTGYYLYSKSRNNALLNRLSNTCQTAMTRLINCPDETYAFLGRGWPQSYTNKTIASMVCSRGCKDSIQSWYEEVTTHCKEFDTKEDVMNFRGGILWAGWNQTCLQSPQGGEYCSDVIAGFSPVKHAEEMLDSELCSYCYTTVLQMAQQSPYSFYDQSYQRLLNLTQERCGLTGATDIAKPVEDRSDDPNDFCASDIVYTTIQGDTCDSIAVTHTISSAALFIGSPEIIDCTDIRPGLSICLPFSCDNVYTYPANATCATIEDSFGMDSGVIRRLNPWIDGGCTNLQEWSVNYGHVLCVSPQAGTHTHMAPPPGVTSLPGSDTGFTDQDIAPPANSTVANGTTMSCGRWHVARDQDTCTAICVQGGIEFSLFLAVNPSLSADSCTTELQMGAAYCTGPTQGWGLVRPNSTTPRSSVVATNTALDLGI.

The segment at valine 148–serine 168 is disordered. The segment covering serine 157–serine 168 has biased composition (basic and acidic residues). 2 LysM domains span residues isoleucine 1028 to leucine 1073 and arginine 1179 to threonine 1227.

It belongs to the secreted LysM effector family.

Functionally, non-secreted LysM effector that might be involved in manipulation of host defenses for successful infection. The sequence is that of Non-secreted LysM effector LysM19 from Penicillium expansum (Blue mold rot fungus).